A 306-amino-acid polypeptide reads, in one-letter code: Curved DNA-binding protein (306 aa).

In terms of domain architecture, J spans 5–69 (DYYAIMGVKP…QRRAEYDQMW (65 aa)).

Its subcellular location is the cytoplasm. It is found in the nucleoid. In terms of biological role, DNA-binding protein that preferentially recognizes a curved DNA sequence. It is probably a functional analog of DnaJ; displays overlapping activities with DnaJ, but functions under different conditions, probably acting as a molecular chaperone in an adaptive response to environmental stresses other than heat shock. Lacks autonomous chaperone activity; binds native substrates and targets them for recognition by DnaK. Its activity is inhibited by the binding of CbpM. This Escherichia coli (strain K12 / MC4100 / BW2952) protein is Curved DNA-binding protein.